A 192-amino-acid chain; its full sequence is 3-hydroxyanthranilate 3,4-dioxygenase 1 (192 aa).

Residue Arg-50 coordinates O2. Positions 54, 60, and 102 each coordinate Fe cation. Glu-60 provides a ligand contact to substrate. Residues Arg-106 and Glu-116 each coordinate substrate. Cys-131, Cys-134, Cys-168, and Cys-171 together coordinate a divalent metal cation.

This sequence belongs to the 3-HAO family. Fe(2+) is required as a cofactor.

The protein resides in the cytoplasm. The catalysed reaction is 3-hydroxyanthranilate + O2 = (2Z,4Z)-2-amino-3-carboxymuconate 6-semialdehyde. It participates in cofactor biosynthesis; NAD(+) biosynthesis; quinolinate from L-kynurenine: step 3/3. In terms of biological role, catalyzes the oxidative ring opening of 3-hydroxyanthranilate to 2-amino-3-carboxymuconate semialdehyde, which spontaneously cyclizes to quinolinate. This is 3-hydroxyanthranilate 3,4-dioxygenase 1 (bna1-1) from Aspergillus clavatus (strain ATCC 1007 / CBS 513.65 / DSM 816 / NCTC 3887 / NRRL 1 / QM 1276 / 107).